Reading from the N-terminus, the 366-residue chain is Uroporphyrinogen decarboxylase (366 aa).

Substrate contacts are provided by residues 28-32 (RQAGR), aspartate 78, tyrosine 160, threonine 215, and histidine 333.

Belongs to the uroporphyrinogen decarboxylase family. Homodimer.

The protein resides in the cytoplasm. It carries out the reaction uroporphyrinogen III + 4 H(+) = coproporphyrinogen III + 4 CO2. The protein operates within porphyrin-containing compound metabolism; protoporphyrin-IX biosynthesis; coproporphyrinogen-III from 5-aminolevulinate: step 4/4. Its function is as follows. Catalyzes the decarboxylation of four acetate groups of uroporphyrinogen-III to yield coproporphyrinogen-III. This is Uroporphyrinogen decarboxylase from Paraburkholderia phytofirmans (strain DSM 17436 / LMG 22146 / PsJN) (Burkholderia phytofirmans).